We begin with the raw amino-acid sequence, 423 residues long: Putative competence-damage inducible protein (423 aa).

The protein belongs to the CinA family.

In Streptococcus equi subsp. zooepidemicus (strain H70), this protein is Putative competence-damage inducible protein.